Consider the following 233-residue polypeptide: Cytidylate kinase (233 aa).

15–23 (GPSGAGKSS) serves as a coordination point for ATP. Residues 183 to 200 (QRDRQDEGREHAPLKQAE) are compositionally biased toward basic and acidic residues. Positions 183-203 (QRDRQDEGREHAPLKQAEDAV) are disordered.

It belongs to the cytidylate kinase family. Type 1 subfamily.

It localises to the cytoplasm. The enzyme catalyses CMP + ATP = CDP + ADP. It carries out the reaction dCMP + ATP = dCDP + ADP. This is Cytidylate kinase from Geobacter sp. (strain M21).